Here is a 335-residue protein sequence, read N- to C-terminus: Fimbrial adhesin PapGIII (335 aa).

The first 21 residues, 1 to 21, serve as a signal peptide directing secretion; that stretch reads MKKWLPAFLFLSLSGCNDALA.

This sequence belongs to the adhesin PapG family.

It is found in the secreted. The protein localises to the fimbrium. Functionally, tip adhesin component of type P pili that binds preferentially to Gal-alpha(1-4)-Gal-containing glycolipids such as globoside. This tip is common in E.coli strains that cause human cystitis, but rare in pyelonephritic isolates. The chain is Fimbrial adhesin PapGIII from Escherichia coli.